Here is a 330-residue protein sequence, read N- to C-terminus: Probable aldo-keto reductase 6 (330 aa).

The active-site Proton donor is the Tyr-64. His-132 contacts substrate. Position 211-221 (211-221 (SPLGRGFLGLP)) interacts with NADP(+).

This sequence belongs to the aldo/keto reductase family.

The polypeptide is Probable aldo-keto reductase 6 (Arabidopsis thaliana (Mouse-ear cress)).